Consider the following 619-residue polypeptide: Sodium-dependent dopamine transporter (619 aa).

Topologically, residues methionine 1–glutamate 56 are cytoplasmic. Residues alanine 57–glycine 95 form a discontinuously helical membrane-spanning segment. Na(+)-binding residues include glycine 75, alanine 77, valine 78, aspartate 79, and asparagine 82. Aspartate 79 contacts dopamine. The next 2 membrane-spanning stretches (helical) occupy residues glycine 96 to glycine 127 and alanine 128 to phenylalanine 171. Positions 149 and 153 each coordinate dopamine. The Extracellular portion of the chain corresponds to threonine 172–proline 235. Cysteine 180 and cysteine 189 are joined by a disulfide. N-linked (GlcNAc...) asparagine glycans are attached at residues asparagine 181, asparagine 188, asparagine 196, and asparagine 204. The next 2 membrane-spanning stretches (helical) occupy residues arginine 236–tryptophan 255 and lysine 256–leucine 286. Topologically, residues proline 287–cysteine 305 are extracellular. A discontinuously helical membrane pass occupies residues glutamate 306–tyrosine 334. Glutamine 316 is a binding site for chloride. Dopamine is bound at residue phenylalanine 319. Residues serine 320 and asparagine 352 each coordinate Na(+). Chloride is bound at residue serine 320. A helical membrane pass occupies residues asparagine 335–asparagine 375. Position 356 (serine 356) interacts with chloride. Topologically, residues valine 376–threonine 399 are extracellular. Transmembrane regions (helical) follow at residues leucine 400–histidine 441, arginine 442–asparagine 465, and glycine 466–tyrosine 498. Leucine 417, aspartate 420, and serine 421 together coordinate Na(+). Serine 421 and alanine 422 together coordinate dopamine. Residues glycine 499 to proline 515 lie on the Cytoplasmic side of the membrane. A helical transmembrane segment spans residues asparagine 516–threonine 541. The Extracellular segment spans residues phenylalanine 542–phenylalanine 552. The chain crosses the membrane as a helical span at residues proline 553–leucine 582. The tract at residues glycine 560 to lysine 589 is interaction with TGFB1I1. The Cytoplasmic portion of the chain corresponds to proline 583–leucine 619.

The protein belongs to the sodium:neurotransmitter symporter (SNF) (TC 2.A.22) family. SLC6A3 subfamily. As to quaternary structure, monomer. Homooligomer; disulfide-linked. Interacts with PRKCABP and TGFB1I1. Interacts (via N-terminus) with SYNGR3 (via N-terminus). Interacts with SLC18A2. Interacts with TOR1A (ATP-bound); TOR1A regulates SLC6A3 subcellular location. Interacts with alpha-synuclein/SNCA. Interacts with SEPTIN4. In terms of tissue distribution, brain. Expressed in the substantia nigra and ventral tegmental area, regions that contain dopaminergic cell bodies.

It is found in the cell membrane. The protein localises to the cell projection. It localises to the neuron projection. Its subcellular location is the axon. The enzyme catalyses dopamine(out) + chloride(out) + Na(+)(out) = dopamine(in) + chloride(in) + Na(+)(in). It carries out the reaction (R)-noradrenaline(out) + chloride(out) + Na(+)(out) = (R)-noradrenaline(in) + chloride(in) + Na(+)(in). It catalyses the reaction dopamine(out) + chloride(out) + 2 Na(+)(out) = dopamine(in) + chloride(in) + 2 Na(+)(in). Its activity is regulated as follows. Inhibited by mazindol, cocaine, desipramine, GBR 12783 dihydrochloride, GBR 12909 dihydrochloride and nomifensine. Inhibited by zinc ions. Functionally, mediates sodium- and chloride-dependent transport of dopamine. Also mediates sodium- and chloride-dependent transport of norepinephrine (also known as noradrenaline). Regulator of light-dependent retinal hyaloid vessel regression, downstream of OPN5 signaling. In Rattus norvegicus (Rat), this protein is Sodium-dependent dopamine transporter (Slc6a3).